Consider the following 502-residue polypeptide: Probable cytosol aminopeptidase (502 aa).

Mn(2+) is bound by residues Lys269 and Asp274. Lys281 is a catalytic residue. Asp292, Asp351, and Glu353 together coordinate Mn(2+). Arg355 is a catalytic residue.

Belongs to the peptidase M17 family. Mn(2+) is required as a cofactor.

It is found in the cytoplasm. It catalyses the reaction Release of an N-terminal amino acid, Xaa-|-Yaa-, in which Xaa is preferably Leu, but may be other amino acids including Pro although not Arg or Lys, and Yaa may be Pro. Amino acid amides and methyl esters are also readily hydrolyzed, but rates on arylamides are exceedingly low.. The enzyme catalyses Release of an N-terminal amino acid, preferentially leucine, but not glutamic or aspartic acids.. Presumably involved in the processing and regular turnover of intracellular proteins. Catalyzes the removal of unsubstituted N-terminal amino acids from various peptides. In Vibrio vulnificus (strain CMCP6), this protein is Probable cytosol aminopeptidase.